Here is a 156-residue protein sequence, read N- to C-terminus: Ribosome maturation factor RimP (156 aa).

It belongs to the RimP family.

It localises to the cytoplasm. Required for maturation of 30S ribosomal subunits. In Prochlorococcus marinus (strain NATL1A), this protein is Ribosome maturation factor RimP.